Consider the following 410-residue polypeptide: Dipeptidase 1 (410 aa).

Positions Met-1–Ala-16 are cleaved as a signal peptide. Zn(2+) contacts are provided by His-36 and Asp-38. N-linked (GlcNAc...) asparagine glycans are attached at residues Asn-57 and Asn-62. The cysteines at positions 87 and 170 are disulfide-linked. Glu-141 lines the Zn(2+) pocket. His-168 lines the substrate pocket. Zn(2+) is bound by residues His-214 and His-235. Residues Cys-242 and Cys-274 are joined by a disulfide bond. Arg-246 contributes to the substrate binding site. Asn-279 carries an N-linked (GlcNAc...) asparagine glycan. Asp-304 serves as a coordination point for substrate. Ser-384 is lipidated: GPI-anchor amidated serine. Positions Gly-385–Leu-410 are cleaved as a propeptide — removed in mature form.

Belongs to the metallo-dependent hydrolases superfamily. Peptidase M19 family. Homodimer; disulfide-linked. It depends on Zn(2+) as a cofactor.

The protein localises to the apical cell membrane. It carries out the reaction an L-aminoacyl-L-amino acid + H2O = 2 an L-alpha-amino acid. The catalysed reaction is leukotriene D4 + H2O = leukotriene E4 + glycine. The enzyme catalyses L-cystine-bis-glycine + 2 H2O = L-cystine + 2 glycine. It catalyses the reaction a beta-lactam + H2O = a substituted beta-amino acid. It carries out the reaction glycyldehydrophenylalanine + H2O = 2,3-didehydrophenylalanine + glycine. Its activity is regulated as follows. Inhibited by L-penicillamine. Inhibited by cilastatin. Functionally, hydrolyzes a wide range of dipeptides including the conversion of leukotriene D4 to leukotriene E4. Hydrolyzes cystinyl-bis-glycine (cys-bis-gly) formed during glutathione degradation. Also possesses beta lactamase activity and hydrolytically inactivates beta-lactam antibiotics. In terms of biological role, independently of its dipeptidase activity, acts as an adhesion receptor for neutrophil recruitment from bloodstream into inflamed lungs and liver. The chain is Dipeptidase 1 (DPEP1) from Bos taurus (Bovine).